The primary structure comprises 216 residues: Thymidylate kinase (216 aa).

10-17 (GIDGCGKT) is an ATP binding site.

This sequence belongs to the thymidylate kinase family.

It carries out the reaction dTMP + ATP = dTDP + ADP. In terms of biological role, phosphorylation of dTMP to form dTDP in both de novo and salvage pathways of dTTP synthesis. In Prochlorococcus marinus (strain MIT 9313), this protein is Thymidylate kinase.